Reading from the N-terminus, the 580-residue chain is N(6)-adenosine-methyltransferase catalytic subunit METTL3 (580 aa).

A disordered region spans residues 1–70 (MSDTWSSIQA…PKPSTASAVP (70 aa)). Serine 2 carries the post-translational modification N-acetylserine; alternate. Position 2 is a phosphoserine; alternate (serine 2). Positions 28 to 37 (QDSGHLDLRN) are enriched in basic and acidic residues. Serine 43, serine 48, and serine 50 each carry phosphoserine. Glycyl lysine isopeptide (Lys-Gly) (interchain with G-Cter in SUMO1) cross-links involve residues lysine 177, lysine 211, lysine 212, and lysine 215. The tract at residues 198–219 (LNSSASEPAKEPAKKSRKHAAS) is disordered. The Nuclear localization signal motif lies at 210–215 (AKKSRK). Phosphoserine is present on residues serine 219 and serine 243. A Phosphothreonine modification is found at threonine 348. At serine 350 the chain carries Phosphoserine. Residues 377 to 378 (DI) and aspartate 395 contribute to the S-adenosyl-L-methionine site. Residues 396–410 (PPWDIHMELPYGTLT) are gate loop 1. Interaction with METTL14 regions lie at residues 450 to 454 (ERVDE) and 464 to 480 (QRII…NHGK). The segment at 462–479 (QLQRIIRTGRTGHWLNHG) is interphase loop. Residues 465-478 (RIIRTGRTGHWLNH) are positively charged region required for RNA-binding. The tract at residues 507-515 (VRSTSHKPD) is gate loop 2. Residues lysine 513, 536–539 (RPHN), and 549–550 (NQ) contribute to the S-adenosyl-L-methionine site.

It belongs to the MT-A70-like family. In terms of assembly, heterodimer; heterodimerizes with METTL14 to form an antiparallel heterodimer that constitutes an active methyltransferase. Component of the WMM complex, a N6-methyltransferase complex composed of a catalytic subcomplex, named MAC, and of an associated subcomplex, named MACOM. The MAC subcomplex is composed of METTL3 and METTL14. The MACOM subcomplex is composed of WTAP, ZC3H13, CBLL1/HAKAI, VIRMA, and, in some cases of RBM15 (RBM15 or RBM15B). Interacts with NCBP1/CBP80. Interacts with EIF4E. Interacts with EIF3B. Sumoylation inhibits the N6-adenosine-methyltransferase activity. Sumoylation does not affect subcellular location or interaction with METTL14. Desumoylated by SENP1. Widely expressed at low level. Expressed in spleen, thymus, prostate, testis, ovary, small intestine, colon and peripheral blood leukocytes.

The protein localises to the nucleus. It is found in the nucleus speckle. Its subcellular location is the cytoplasm. The enzyme catalyses an adenosine in mRNA + S-adenosyl-L-methionine = an N(6)-methyladenosine in mRNA + S-adenosyl-L-homocysteine + H(+). With respect to regulation, methyltransferase activity is regulated by miRNAs via a sequence pairing mechanism. Methyltransferase activity is inhibited by sumoylation. Its function is as follows. The METTL3-METTL14 heterodimer forms a N6-methyltransferase complex that methylates adenosine residues at the N(6) position of some RNAs and regulates various processes such as the circadian clock, differentiation of embryonic and hematopoietic stem cells, cortical neurogenesis, response to DNA damage, differentiation of T-cells and primary miRNA processing. In the heterodimer formed with METTL14, METTL3 constitutes the catalytic core. N6-methyladenosine (m6A), which takes place at the 5'-[AG]GAC-3' consensus sites of some mRNAs, plays a role in mRNA stability, processing, translation efficiency and editing. M6A acts as a key regulator of mRNA stability: methylation is completed upon the release of mRNA into the nucleoplasm and promotes mRNA destabilization and degradation. In embryonic stem cells (ESCs), m6A methylation of mRNAs encoding key naive pluripotency-promoting transcripts results in transcript destabilization, promoting differentiation of ESCs. M6A regulates the length of the circadian clock: acts as an early pace-setter in the circadian loop by putting mRNA production on a fast-track for facilitating nuclear processing, thereby providing an early point of control in setting the dynamics of the feedback loop. M6A also regulates circadian regulation of hepatic lipid metabolism. M6A regulates spermatogonial differentiation and meiosis and is essential for male fertility and spermatogenesis. Also required for oogenesis. Involved in the response to DNA damage: in response to ultraviolet irradiation, METTL3 rapidly catalyzes the formation of m6A on poly(A) transcripts at DNA damage sites, leading to the recruitment of POLK to DNA damage sites. M6A is also required for T-cell homeostasis and differentiation: m6A methylation of transcripts of SOCS family members (SOCS1, SOCS3 and CISH) in naive T-cells promotes mRNA destabilization and degradation, promoting T-cell differentiation. Inhibits the type I interferon response by mediating m6A methylation of IFNB. M6A also takes place in other RNA molecules, such as primary miRNA (pri-miRNAs). Mediates m6A methylation of Xist RNA, thereby participating in random X inactivation: m6A methylation of Xist leads to target YTHDC1 reader on Xist and promote transcription repression activity of Xist. M6A also regulates cortical neurogenesis: m6A methylation of transcripts related to transcription factors, neural stem cells, the cell cycle and neuronal differentiation during brain development promotes their destabilization and decay, promoting differentiation of radial glial cells. METTL3 mediates methylation of pri-miRNAs, marking them for recognition and processing by DGCR8. Acts as a positive regulator of mRNA translation independently of the methyltransferase activity: promotes translation by interacting with the translation initiation machinery in the cytoplasm. Its overexpression in a number of cancer cells suggests that it may participate in cancer cell proliferation by promoting mRNA translation. During human coronavirus SARS-CoV-2 infection, adds m6A modifications in SARS-CoV-2 RNA leading to decreased RIGI binding and subsequently dampening the sensing and activation of innate immune responses. This is N(6)-adenosine-methyltransferase catalytic subunit METTL3 from Homo sapiens (Human).